The sequence spans 1323 residues: ABC transporter gloK (1323 aa).

7 helical membrane passes run 6–26 (AIAS…TLEA), 102–122 (PHAL…AGIL), 138–158 (VAYG…VMST), 217–237 (IWAS…RLGV), 240–260 (VAAV…VFGF), 325–345 (LLVG…VFAF), and 359–379 (PLLA…GQAV). One can recognise an ABC transmembrane type-1 1 domain in the interval 142-380 (LIAAYAIVYI…IFSLLGQAVS (239 aa)). The region spanning 471–697 (IRDCSACWSK…SSYLESLGTR (227 aa)) is the ABC transporter 1 domain. Position 503–510 (503–510 (GPIGSGKS)) interacts with ATP. 7 helical membrane passes run 748 to 768 (GWVT…GLVF), 795 to 815 (YALW…WLMI), 821 to 841 (AAIQ…LVYF), 859 to 879 (LIDM…LSCI), 891 to 910 (YVAA…QLFY), 976 to 996 (LNLT…SIAL), and 1006 to 1026 (IGVA…LVYT). Positions 752–1031 (WWVFVLLCSG…TLVYTWTSLE (280 aa)) constitute an ABC transmembrane type-1 2 domain. The 232-residue stretch at 1069 to 1300 (IRFQSVSAAY…PSFFASLLKA (232 aa)) folds into the ABC transporter 2 domain. 1103-1110 (GRTGSGKS) contacts ATP.

The protein belongs to the ABC transporter superfamily. ABCC family. Conjugate transporter (TC 3.A.1.208) subfamily.

It is found in the cell membrane. Functionally, 3-isopropylmalate dehydratase large subunit; part of the gene cluster that mediates the biosynthesis of pneumocandins, lipohexapeptides of the echinocandin family that prevent fungal cell wall formation by non-competitive inhibition of beta-1,3-glucan synthase. Possibly secretes antifungal pneumocandins, thus avoiding of intracellular accumulation and ameliorating the toxicity to the producing cells. In Glarea lozoyensis (strain ATCC 20868 / MF5171), this protein is ABC transporter gloK.